Reading from the N-terminus, the 435-residue chain is MGKEKTHINLVVIGHVDSGKSTTTGHLIYKLGGIDKRTIEKFEKESSEMGKGSFKYAWVLDKLKAERERGITIDIALWQFETPKYHYTVIDAPGHRDFIKNMITGTSQADVALLVVPADRFEGAFSKEGQTREHALLAFTLGVRQMIVGINKMDTCEYKQSRFDEIFNEVDGYLKKVGYNTEKIPFVAISGFVGDNMVERSDKMPWYKGKTLVEALDTMEPPKRPTDKPLRLPLQDVYKIGGVGTVPVGRVETGIIRPGMNVTFAPAGVTTEVKSVEMHHEQMPEAVPGDNVGFNVKNVSIKDIKRGFVASDAKNDPAKGCEDFTAQVIVLNHPGEIKNGYSPVVDCHTAHISCKFQTITAKMDKRSGKVLEENPKLIKSGDAALVVMQPLKPLCVEAFTDYPPLGRFAVRDMKQTVAVGVIKSVTKKEATSKKK.

The tr-type G domain occupies 5–226; the sequence is KTHINLVVIG…DTMEPPKRPT (222 aa). Residues 14–21 are G1; that stretch reads GHVDSGKS. 14–21 contributes to the GTP binding site; that stretch reads GHVDSGKS. Residues 70-74 form a G2 region; the sequence is GITID. The tract at residues 91–94 is G3; that stretch reads DAPG. GTP contacts are provided by residues 91 to 95 and 151 to 154; these read DAPGH and NKMD. Positions 151–154 are G4; it reads NKMD. The tract at residues 190-192 is G5; the sequence is SGF.

This sequence belongs to the TRAFAC class translation factor GTPase superfamily. Classic translation factor GTPase family. EF-Tu/EF-1A subfamily.

The protein resides in the cytoplasm. Functionally, this protein promotes the GTP-dependent binding of aminoacyl-tRNA to the A-site of ribosomes during protein biosynthesis. The chain is Elongation factor 1-alpha from Cryptosporidium parvum.